A 117-amino-acid polypeptide reads, in one-letter code: DNA-directed RNA polymerase subunit omega (117 aa).

The span at 96-105 shows a compositional bias: basic and acidic residues; it reads KEEAEEEAKQ. The interval 96–117 is disordered; that stretch reads KEEAEEEAKQKNSRAAKAAAAE. Over residues 108 to 117 the composition is skewed to low complexity; sequence SRAAKAAAAE.

This sequence belongs to the RNA polymerase subunit omega family. In terms of assembly, the RNAP catalytic core consists of 2 alpha, 1 beta, 1 beta' and 1 omega subunit. When a sigma factor is associated with the core the holoenzyme is formed, which can initiate transcription.

The catalysed reaction is RNA(n) + a ribonucleoside 5'-triphosphate = RNA(n+1) + diphosphate. Promotes RNA polymerase assembly. Latches the N- and C-terminal regions of the beta' subunit thereby facilitating its interaction with the beta and alpha subunits. The chain is DNA-directed RNA polymerase subunit omega (rpoZ) from Lactococcus lactis subsp. lactis (strain IL1403) (Streptococcus lactis).